The sequence spans 928 residues: Diacylglycerol kinase zeta (928 aa).

Residues methionine 1–aspartate 14 show a composition bias toward basic and acidic residues. Disordered regions lie at residues methionine 1–proline 46 and lysine 59–glutamine 82. The segment covering serine 15–glycine 24 has biased composition (low complexity). Positions serine 25–proline 37 are enriched in basic and acidic residues. Phorbol-ester/DAG-type zinc fingers lie at residues histidine 98–cysteine 152 and histidine 172–cysteine 230. Residues proline 251–tryptophan 280 form a disordered region. A compositionally biased stretch (basic residues) spans alanine 257–lysine 272. An MARCKS homology region spans residues lysine 259–lysine 273. A mediates interaction with RASGRP1 region spans residues glycine 278–leucine 416. A DAGKc domain is found at proline 291–proline 425. Residues leucine 361 to leucine 369 carry the Nuclear export signal motif. Serine 705 is modified (phosphoserine). A disordered region spans residues alanine 759–proline 788. Residues leucine 763 to proline 777 are compositionally biased toward pro residues. Serine 781 is modified (phosphoserine). 2 ANK repeats span residues glutamine 822–aspartate 852 and asparagine 857–lysine 886. Positions glutamine 924–valine 928 match the PDZ-binding motif.

The protein belongs to the eukaryotic diacylglycerol kinase family. Interacts (via PDZ-binding motif) with the PDZ domain of the syntrophin SNTG1 and that of SNX27. Interacts with IRS1 in the absence of insulin; insulin stimulation decreases this interaction. Found in a ternary complex with IRS1 and PIP5K1A in the absence of insulin. Interacts with PIP5K1A. In terms of assembly, forms a signaling complex with RASGRP1 and HRAS. Post-translationally, phosphorylation of the MARCKS homology domain by PKC reduces nuclear accumulation of DGK-zeta. Highest levels in brain, and substantial levels in skeletal muscle, heart, and pancreas. In terms of tissue distribution, predominantly expressed in muscle.

It is found in the nucleus. The protein localises to the cytoplasm. Its subcellular location is the cytosol. It localises to the cell membrane. The protein resides in the cell projection. It is found in the lamellipodium. It carries out the reaction a 1,2-diacyl-sn-glycerol + ATP = a 1,2-diacyl-sn-glycero-3-phosphate + ADP + H(+). The catalysed reaction is a 1-O-alkyl-sn-glycerol + ATP = a 1-O-alkyl-sn-glycero-3-phosphate + ADP + H(+). The enzyme catalyses 1-O-alkyl-2-acyl-sn-glycerol + ATP = 1-O-alkyl-2-acyl-sn-glycero-3-phosphate + ADP + H(+). It catalyses the reaction 1,2-didecanoyl-sn-glycerol + ATP = 1,2-didecanoyl-sn-glycero-3-phosphate + ADP + H(+). It carries out the reaction 1,2-ditetradecanoyl-sn-glycerol + ATP = 1,2-ditetradecanoyl-sn-glycero-3-phosphate + ADP + H(+). The catalysed reaction is 1-hexadecanoyl-2-(9Z-octadecenoyl)-sn-glycerol + ATP = 1-hexadecanoyl-2-(9Z-octadecenoyl)-sn-glycero-3-phosphate + ADP + H(+). The enzyme catalyses 1-hexadecanoyl-2-(5Z,8Z,11Z,14Z-eicosatetraenoyl)-sn-glycerol + ATP = 1-hexadecanoyl-2-(5Z,8Z,11Z,14Z-eicosatetraenoyl)-sn-glycero-3-phosphate + ADP + H(+). It catalyses the reaction 1-octadecanoyl-2-(9Z-octadecenoyl)-sn-glycerol + ATP = 1-octadecanoyl-2-(9Z-octadecenoyl)-sn-glycero-3-phosphate + ADP + H(+). It carries out the reaction 1-octadecanoyl-2-(5Z,8Z,11Z,14Z-eicosatetraenoyl)-sn-glycerol + ATP = 1-octadecanoyl-2-(5Z,8Z,11Z,14Z-eicosatetraenoyl)-sn-glycero-3-phosphate + ADP + H(+). The catalysed reaction is 1-octadecanoyl-2-(4Z,7Z,10Z,13Z,16Z,19Z-docosahexaenoyl)-sn-glycerol + ATP = 1-octadecanoyl-2-(4Z,7Z,10Z,13Z,16Z,19Z-docosahexaenoyl)-sn-glycero-3-phosphate + ADP + H(+). The enzyme catalyses 1,2-di-(9Z-octadecenoyl)-sn-glycerol + ATP = 1,2-di-(9Z-octadecenoyl)-sn-glycero-3-phosphate + ADP + H(+). It catalyses the reaction 1-(9Z-octadecenoyl)-2-hexadecanoyl-sn-glycerol + ATP = 1-(9Z)-octadecenoyl-2-hexadecanoyl-sn-glycero-3-phosphate + ADP + H(+). It carries out the reaction 1-eicosanoyl-2-(5Z,8Z,11Z,14Z)-eicosatetraenoyl-sn-glycerol + ATP = 1-eicosanoyl-2-(5Z,8Z,11Z,14Z)-eicosatetraenoyl-sn-glycero-3-phosphate + ADP + H(+). The catalysed reaction is 1,2-di-(5Z,8Z,11Z,14Z)-eicosatetraenoyl-sn-glycerol + ATP = 1,2-di-(5Z,8Z,11Z,14Z)-eicosatetraenoyl-sn-glycero-3-phosphate + ADP + H(+). The enzyme catalyses 1-O-hexadecyl-2-acetyl-sn-glycerol + ATP = 1-O-hexadecyl-2-acetyl-sn-glycero-3-phosphate + ADP + H(+). It catalyses the reaction 1-O-hexadecyl-2-(5Z,8Z,11Z,14Z-eicosatetraenoyl)-sn-glycerol + ATP = 1-O-hexadecyl-2-(5Z,8Z,11Z,14Z-eicosatetraenoyl)-sn-glycero-3-phosphate + ADP + H(+). It carries out the reaction 1-O-hexadecyl-2-(9Z-octadecenoyl)-sn-glycerol + ATP = 1-O-hexadecyl-2-(9Z-octadecenoyl)-sn-glycero-3-phosphate + ADP + H(+). The catalysed reaction is 1-O-hexadecyl-sn-glycerol + ATP = 1-O-hexadecyl-sn-glycero-3-phosphate + ADP + H(+). Its pathway is lipid metabolism; glycerolipid metabolism. Its activity is regulated as follows. Activated by 1,2-diacyl-sn-glycero-3-phosphate/phosphatidic acid irrespective of its acyl chain composition. Its function is as follows. Diacylglycerol kinase that converts diacylglycerol/DAG into phosphatidic acid/phosphatidate/PA and regulates the respective levels of these two bioactive lipids. Thereby, acts as a central switch between the signaling pathways activated by these second messengers with different cellular targets and opposite effects in numerous biological processes. Also plays an important role in the biosynthesis of complex lipids. Does not exhibit an acyl chain-dependent substrate specificity among diacylglycerol species. Can also phosphorylate 1-alkyl-2-acylglycerol in vitro but less efficiently and with a preference for alkylacylglycerols containing an arachidonoyl group. The biological processes it is involved in include T cell activation since it negatively regulates T-cell receptor signaling which is in part mediated by diacylglycerol. By generating phosphatidic acid, stimulates PIP5KIA activity which regulates actin polymerization. Through the same mechanism could also positively regulate insulin-induced translocation of SLC2A4 to the cell membrane. Regulates RASGRP1 activity. Functionally, does not regulate RASGRP1 activity. The sequence is that of Diacylglycerol kinase zeta from Homo sapiens (Human).